We begin with the raw amino-acid sequence, 168 residues long: Phosphopantetheine adenylyltransferase (168 aa).

Threonine 9 serves as a coordination point for substrate. ATP-binding positions include 9–10 (TF) and histidine 17. Positions 41, 74, and 88 each coordinate substrate. ATP contacts are provided by residues 89–91 (GLR), glutamate 99, and 124–130 (LQPIASR).

The protein belongs to the bacterial CoaD family. In terms of assembly, homohexamer. Mg(2+) is required as a cofactor.

Its subcellular location is the cytoplasm. It carries out the reaction (R)-4'-phosphopantetheine + ATP + H(+) = 3'-dephospho-CoA + diphosphate. Its pathway is cofactor biosynthesis; coenzyme A biosynthesis; CoA from (R)-pantothenate: step 4/5. Functionally, reversibly transfers an adenylyl group from ATP to 4'-phosphopantetheine, yielding dephospho-CoA (dPCoA) and pyrophosphate. The protein is Phosphopantetheine adenylyltransferase of Sphingopyxis alaskensis (strain DSM 13593 / LMG 18877 / RB2256) (Sphingomonas alaskensis).